Reading from the N-terminus, the 128-residue chain is Ribosome-binding factor A (128 aa).

This sequence belongs to the RbfA family. In terms of assembly, monomer. Binds 30S ribosomal subunits, but not 50S ribosomal subunits or 70S ribosomes.

It is found in the cytoplasm. In terms of biological role, one of several proteins that assist in the late maturation steps of the functional core of the 30S ribosomal subunit. Associates with free 30S ribosomal subunits (but not with 30S subunits that are part of 70S ribosomes or polysomes). Required for efficient processing of 16S rRNA. May interact with the 5'-terminal helix region of 16S rRNA. In Haemophilus influenzae (strain 86-028NP), this protein is Ribosome-binding factor A.